We begin with the raw amino-acid sequence, 261 residues long: Ribonuclease HII (261 aa).

One can recognise an RNase H type-2 domain in the interval 71–259 (KYIAGVDEVG…VKEAKLHFDS (189 aa)). Residues D77, E78, and D169 each coordinate a divalent metal cation.

Belongs to the RNase HII family. Requires Mn(2+) as cofactor. Mg(2+) serves as cofactor.

The protein localises to the cytoplasm. The enzyme catalyses Endonucleolytic cleavage to 5'-phosphomonoester.. In terms of biological role, endonuclease that specifically degrades the RNA of RNA-DNA hybrids. The polypeptide is Ribonuclease HII (Listeria monocytogenes serotype 4a (strain HCC23)).